The sequence spans 259 residues: Phosphatidylglycerol--prolipoprotein diacylglyceryl transferase (259 aa).

The next 4 helical transmembrane spans lie at 9-29 (IIFSIGPLAVSWYSLSYVVGI), 55-75 (FITYAVIGIIVGGRLGFVLLY), 92-112 (EGGMSFHGGALGVIIAAYLFC), and 117-137 (INFLSLTDIIAPVVPIGLFLG). Arginine 138 contacts a 1,2-diacyl-sn-glycero-3-phospho-(1'-sn-glycerol). Transmembrane regions (helical) follow at residues 172–192 (QLYEAFFEGLVLFCILAYATF), 201–221 (GLNSGIFLIFYALFRIAIEIF), and 228–248 (IGFILDSLTMGQILSVPMLLL).

It belongs to the Lgt family.

It localises to the cell inner membrane. The catalysed reaction is L-cysteinyl-[prolipoprotein] + a 1,2-diacyl-sn-glycero-3-phospho-(1'-sn-glycerol) = an S-1,2-diacyl-sn-glyceryl-L-cysteinyl-[prolipoprotein] + sn-glycerol 1-phosphate + H(+). It functions in the pathway protein modification; lipoprotein biosynthesis (diacylglyceryl transfer). Functionally, catalyzes the transfer of the diacylglyceryl group from phosphatidylglycerol to the sulfhydryl group of the N-terminal cysteine of a prolipoprotein, the first step in the formation of mature lipoproteins. In Rickettsia felis (strain ATCC VR-1525 / URRWXCal2) (Rickettsia azadi), this protein is Phosphatidylglycerol--prolipoprotein diacylglyceryl transferase.